We begin with the raw amino-acid sequence, 277 residues long: 2-dehydro-3-deoxyphosphooctonate aldolase (277 aa).

The protein belongs to the KdsA family.

Its subcellular location is the cytoplasm. It catalyses the reaction D-arabinose 5-phosphate + phosphoenolpyruvate + H2O = 3-deoxy-alpha-D-manno-2-octulosonate-8-phosphate + phosphate. It functions in the pathway carbohydrate biosynthesis; 3-deoxy-D-manno-octulosonate biosynthesis; 3-deoxy-D-manno-octulosonate from D-ribulose 5-phosphate: step 2/3. Its pathway is bacterial outer membrane biogenesis; lipopolysaccharide biosynthesis. This Mesorhizobium japonicum (strain LMG 29417 / CECT 9101 / MAFF 303099) (Mesorhizobium loti (strain MAFF 303099)) protein is 2-dehydro-3-deoxyphosphooctonate aldolase (kdsA).